Reading from the N-terminus, the 284-residue chain is MEMO1 family protein YN1551_0739 (284 aa).

Belongs to the MEMO1 family.

In Saccharolobus islandicus (strain Y.N.15.51 / Yellowstone #2) (Sulfolobus islandicus), this protein is MEMO1 family protein YN1551_0739.